Reading from the N-terminus, the 388-residue chain is Protein TsgA homolog (388 aa).

Transmembrane regions (helical) follow at residues 12–32 (CISFLSYALTGALITITGIFL), 51–71 (TFLNAGILSSIFISSWITNII), 77–97 (LIFGFILTIIATLILIFSHNL), 102–122 (ISMFMLGIISGITMSIGTYII), 137–157 (LTDSFFSMSGIIFPIITALII), 163–183 (WYWVYFIIGIIYLIIFLITIN), 203–223 (FSILCLSISALLYILGQLSFI), 246–266 (SAFWMAYMVGMWIFSFILKFF), 272–292 (IITLSGISLFLMSLFNIFYDY), 294–314 (LLYIIILSLGFFSSAIYTIII), 331–351 (YILTSGTVGTLLTFIITGPIV), and 356–376 (IFSALLVSNILYGIVFFLVII).

Belongs to the major facilitator superfamily. TsgA family.

The protein localises to the cell membrane. This is Protein TsgA homolog from Buchnera aphidicola subsp. Baizongia pistaciae (strain Bp).